A 504-amino-acid chain; its full sequence is Lysine--tRNA ligase (504 aa).

Mg(2+)-binding residues include E404 and E411.

This sequence belongs to the class-II aminoacyl-tRNA synthetase family. In terms of assembly, homodimer. Mg(2+) serves as cofactor.

The protein localises to the cytoplasm. It carries out the reaction tRNA(Lys) + L-lysine + ATP = L-lysyl-tRNA(Lys) + AMP + diphosphate. This chain is Lysine--tRNA ligase, found in Aliarcobacter butzleri (strain RM4018) (Arcobacter butzleri).